Reading from the N-terminus, the 113-residue chain is Iron-sulfur cluster insertion protein ErpA (113 aa).

Positions 41, 105, and 107 each coordinate iron-sulfur cluster.

The protein belongs to the HesB/IscA family. In terms of assembly, homodimer. Iron-sulfur cluster is required as a cofactor.

Functionally, required for insertion of 4Fe-4S clusters for at least IspG. The chain is Iron-sulfur cluster insertion protein ErpA from Vibrio vulnificus (strain CMCP6).